We begin with the raw amino-acid sequence, 212 residues long: Protein GrpE (212 aa).

Residues Met1–Ser69 are disordered. Residues Glu40–Leu60 are compositionally biased toward low complexity.

It belongs to the GrpE family. In terms of assembly, homodimer.

Its subcellular location is the cytoplasm. In terms of biological role, participates actively in the response to hyperosmotic and heat shock by preventing the aggregation of stress-denatured proteins, in association with DnaK and GrpE. It is the nucleotide exchange factor for DnaK and may function as a thermosensor. Unfolded proteins bind initially to DnaJ; upon interaction with the DnaJ-bound protein, DnaK hydrolyzes its bound ATP, resulting in the formation of a stable complex. GrpE releases ADP from DnaK; ATP binding to DnaK triggers the release of the substrate protein, thus completing the reaction cycle. Several rounds of ATP-dependent interactions between DnaJ, DnaK and GrpE are required for fully efficient folding. The polypeptide is Protein GrpE (Leptospira interrogans serogroup Icterohaemorrhagiae serovar Lai (strain 56601)).